A 413-amino-acid polypeptide reads, in one-letter code: Clusterin-associated protein 1 (413 aa).

Positions 198-291 form a coiled coil; the sequence is KTKDLLNNVA…ERFEEAKNTL (94 aa). Residues 305–413 form a disordered region; sequence LLKSGSNDDS…EPLDESDNDF (109 aa). Acidic residues-rich tracts occupy residues 312–328 and 360–388; these read DDSD…DSEL and DSDD…EDES. A phosphoserine mark is found at Ser-314, Ser-324, and Ser-326. Phosphoserine is present on Ser-409.

This sequence belongs to the CLUAP1 family. In terms of assembly, interacts with CLU/clusterin. Interacts with UBXN10; the interaction is direct. As to expression, expressed in testis, thyroid and trachea and to a lower extent in spinal cord and adrenal gland. Highly expressed in colon cancer and osteosarcoma cell lines.

The protein localises to the cell projection. The protein resides in the cilium. It localises to the nucleus. Required for cilia biogenesis. Appears to function within the multiple intraflagellar transport complex B (IFT-B). Key regulator of hedgehog signaling. This chain is Clusterin-associated protein 1 (CLUAP1), found in Homo sapiens (Human).